The following is a 113-amino-acid chain: Hydrogenase maturation factor HypA (113 aa).

H2 contributes to the Ni(2+) binding site. Residues C70, C73, C86, and C88 each coordinate Zn(2+).

Belongs to the HypA/HybF family.

Involved in the maturation of [NiFe] hydrogenases. Required for nickel insertion into the metal center of the hydrogenase. The chain is Hydrogenase maturation factor HypA from Nostoc punctiforme (strain ATCC 29133 / PCC 73102).